A 409-amino-acid polypeptide reads, in one-letter code: Probable tRNA pseudouridine synthase D (409 aa).

The active-site Nucleophile is D73. The TRUD domain occupies G146–A365.

Belongs to the pseudouridine synthase TruD family.

The enzyme catalyses uridine(13) in tRNA = pseudouridine(13) in tRNA. In terms of biological role, could be responsible for synthesis of pseudouridine from uracil-13 in transfer RNAs. This Thermoplasma volcanium (strain ATCC 51530 / DSM 4299 / JCM 9571 / NBRC 15438 / GSS1) protein is Probable tRNA pseudouridine synthase D.